The sequence spans 123 residues: Small ribosomal subunit protein uS12 (123 aa).

The interval 1 to 27 is disordered; that stretch reads MPTIQQLIRKPRQPKIKRSKSMHLQEC. Positions 9-21 are enriched in basic residues; it reads RKPRQPKIKRSKS. At Asp89 the chain carries 3-methylthioaspartic acid.

It belongs to the universal ribosomal protein uS12 family. Part of the 30S ribosomal subunit. Contacts proteins S8 and S17. May interact with IF1 in the 30S initiation complex.

Its function is as follows. With S4 and S5 plays an important role in translational accuracy. In terms of biological role, interacts with and stabilizes bases of the 16S rRNA that are involved in tRNA selection in the A site and with the mRNA backbone. Located at the interface of the 30S and 50S subunits, it traverses the body of the 30S subunit contacting proteins on the other side and probably holding the rRNA structure together. The combined cluster of proteins S8, S12 and S17 appears to hold together the shoulder and platform of the 30S subunit. The protein is Small ribosomal subunit protein uS12 of Roseobacter denitrificans (strain ATCC 33942 / OCh 114) (Erythrobacter sp. (strain OCh 114)).